The following is a 423-amino-acid chain: uncharacterized protein (423 aa).

The interval 383–423 (ARGTTGGGGTRSGTSTDGQEDGRKPPVVVIREQPPPGNPPR) is disordered.

This sequence belongs to the mycobacterial PPE family.

This is an uncharacterized protein from Mycobacterium tuberculosis (strain CDC 1551 / Oshkosh).